The primary structure comprises 842 residues: Pentatricopeptide repeat-containing protein At3g22690 (842 aa).

PPR repeat units follow at residues 98–132 (TCFMYNSLIRGYASSGLCNEAILLFLRMMNSGISP), 133–167 (DKYTFPFGLSACAKSRAKGNGIQIHGLIVKMGYAK), 168–202 (DLFVQNSLVHFYAECGELDSARKVFDEMSERNVVS), 203–234 (WTSMICGYARRDFAKDAVDLFFRMVRDEEVTP), 235–269 (NSVTMVCVISACAKLEDLETGEKVYAFIRNSGIEV), 270–300 (NDLMVSALVDMYMKCNAIDVAKRLFDEYGAS), 301–335 (NLDLCNAMASNYVRQGLTREALGVFNLMMDSGVRP), 336–370 (DRISMLSAISSCSQLRNILWGKSCHGYVLRNGFES), 371–401 (WDNICNALIDMYMKCHRQDTAFRIFDRMSNK), 402–436 (TVVTWNSIVAGYVENGEVDAAWETFETMPEKNIVS), 437–463 (WNTIISGLVQGSLFEEAIEVFCSMQSQ), 469–503 (DGVTMMSIASACGHLGALDLAKWIYYYIEKNGIQL), 504–534 (DVRLGTTLVDMFSRCGDPESAMSIFNSLTNR), 535–569 (DVSAWTAAIGAMAMAGNAERAIELFDDMIEQGLKP), 570–605 (DGVAFVGALTACSHGGLVQQGKEIFYSMLKLHGVSP), and 606–636 (EDVHYGCMVDLLGRAGLLEEAVQLIEDMPME). Residues 641–716 (IWNSLLAACR…PPGTSSIQIR (76 aa)) form a type E motif region. Residues 717-747 (GKTHEFTSGDESHPEMPNIEAMLDEVSQRAS) are type E(+) motif. The type DYW motif stretch occupies residues 748–842 (HLGHVPDLSN…QGKCSCGDFW (95 aa)).

The protein belongs to the PPR family. PCMP-H subfamily.

This Arabidopsis thaliana (Mouse-ear cress) protein is Pentatricopeptide repeat-containing protein At3g22690 (PCMP-H56).